The sequence spans 149 residues: Protein SprT-like (149 aa).

Residues 6 to 147 (LQALVEQISI…VCGRCRSKLK (142 aa)) form the SprT-like domain. Zn(2+) is bound at residue His-67. Glu-68 is a catalytic residue. His-71 is a binding site for Zn(2+).

The protein belongs to the SprT family. It depends on Zn(2+) as a cofactor.

The protein localises to the cytoplasm. In Geobacillus kaustophilus (strain HTA426), this protein is Protein SprT-like.